We begin with the raw amino-acid sequence, 233 residues long: UPF0725 protein At4g17990 (233 aa).

Belongs to the UPF0725 (EMB2204) family.

In Arabidopsis thaliana (Mouse-ear cress), this protein is UPF0725 protein At4g17990.